The primary structure comprises 597 residues: UvrABC system protein C (597 aa).

In terms of domain architecture, GIY-YIG spans 14 to 91; the sequence is KKPGCYLWKD…INQYQPRFNL (78 aa).

This sequence belongs to the UvrC family. Interacts with UvrB in an incision complex.

It localises to the cytoplasm. Its function is as follows. The UvrABC repair system catalyzes the recognition and processing of DNA lesions. UvrC both incises the 5' and 3' sides of the lesion. The N-terminal half is responsible for the 3' incision and the C-terminal half is responsible for the 5' incision. The protein is UvrABC system protein C of Mycoplasma genitalium (strain ATCC 33530 / DSM 19775 / NCTC 10195 / G37) (Mycoplasmoides genitalium).